The chain runs to 57 residues: uncharacterized protein (57 aa).

The helical transmembrane segment at 21–37 threads the bilayer; that stretch reads GTYTLVVAFVLAFLVYS.

The protein localises to the host membrane. This is an uncharacterized protein from Human herpesvirus 6B (strain Z29) (HHV-6 variant B).